The sequence spans 217 residues: Ras-related protein Rab11B (217 aa).

A GTP-binding site is contributed by Gly-21–Ser-28. An Effector region motif is present at residues Ser-43–Phe-51. GTP-binding positions include Asp-69–Gln-73 and Asn-127–Asp-130. 2 S-geranylgeranyl cysteine lipidation sites follow: Cys-214 and Cys-215.

The protein belongs to the small GTPase superfamily. Rab family.

The protein resides in the cell membrane. This chain is Ras-related protein Rab11B (RAB11B), found in Nicotiana tabacum (Common tobacco).